The following is a 529-amino-acid chain: Beta-galactoside alpha-2,6-sialyltransferase 2 (529 aa).

Residues 1–11 (MKPHLKQWRQR) are Cytoplasmic-facing. A helical; Signal-anchor for type II membrane protein membrane pass occupies residues 12 to 32 (MLFGLFAGGLLFLLIFIYFTD). Residues 33 to 529 (SNPAEPVPSS…PAPSPVIPHS (497 aa)) are Lumenal-facing. Positions 142–186 (SHSQGTLGFPSPGEPGPREGAFPAAQVQRRRVKKRHRRQRRSHVL) are disordered. The span at 169–183 (QRRRVKKRHRRQRRS) shows a compositional bias: basic residues. Asn-211 is a glycosylation site (N-linked (GlcNAc...) asparagine). Intrachain disulfides connect Cys-253–Cys-519, Cys-296–Cys-448, and Cys-466–Cys-477.

Belongs to the glycosyltransferase 29 family.

It localises to the golgi apparatus. The protein localises to the golgi stack membrane. The enzyme catalyses a beta-D-galactoside + CMP-N-acetyl-beta-neuraminate = an N-acetyl-alpha-neuraminyl-(2-&gt;6)-beta-D-galactosyl derivative + CMP + H(+). Its function is as follows. Transfers sialic acid from the donor of substrate CMP-sialic acid to galactose containing acceptor substrates. Has alpha-2,6-sialyltransferase activity toward oligosaccharides that have the Gal-beta-1,4-GlcNAc sequence at the non-reducing end of their carbohydrate groups, but it has weak or no activities toward glycoproteins and glycolipids. The sequence is that of Beta-galactoside alpha-2,6-sialyltransferase 2 (ST6GAL2) from Pan troglodytes (Chimpanzee).